A 154-amino-acid polypeptide reads, in one-letter code: Myoglobin (154 aa).

One can recognise a Globin domain in the interval 2–148; the sequence is GLSDEEWKKV…FRNDMASRYK (147 aa). H65 serves as a coordination point for nitrite. Residue H65 coordinates O2. H94 is a heme b binding site.

This sequence belongs to the globin family. As to quaternary structure, monomeric.

Its subcellular location is the cytoplasm. It is found in the sarcoplasm. The enzyme catalyses Fe(III)-heme b-[protein] + nitric oxide + H2O = Fe(II)-heme b-[protein] + nitrite + 2 H(+). The catalysed reaction is H2O2 + AH2 = A + 2 H2O. Functionally, monomeric heme protein which primary function is to store oxygen and facilitate its diffusion within muscle tissues. Reversibly binds oxygen through a pentacoordinated heme iron and enables its timely and efficient release as needed during periods of heightened demand. Depending on the oxidative conditions of tissues and cells, and in addition to its ability to bind oxygen, it also has a nitrite reductase activity whereby it regulates the production of bioactive nitric oxide. Under stress conditions, like hypoxia and anoxia, it also protects cells against reactive oxygen species thanks to its pseudoperoxidase activity. The sequence is that of Myoglobin (MB) from Varanus varius (Lace monitor lizard).